A 361-amino-acid chain; its full sequence is DNA replication and repair protein RecF (361 aa).

ATP is bound at residue 30–37; it reads GPNGSGKT.

It belongs to the RecF family.

The protein localises to the cytoplasm. Its function is as follows. The RecF protein is involved in DNA metabolism; it is required for DNA replication and normal SOS inducibility. RecF binds preferentially to single-stranded, linear DNA. It also seems to bind ATP. This Yersinia pseudotuberculosis serotype IB (strain PB1/+) protein is DNA replication and repair protein RecF.